The following is a 212-amino-acid chain: Ribonuclease P protein component 3 (212 aa).

It belongs to the eukaryotic/archaeal RNase P protein component 3 family. As to quaternary structure, consists of a catalytic RNA component and at least 5 protein subunits. Forms a heterotetrameric subcomplex with Rnp2. Reconstituted enzyme missing individual protein subunits is suboptimally active, showing each subunit contributes to optimization of activity.

The protein localises to the cytoplasm. It catalyses the reaction Endonucleolytic cleavage of RNA, removing 5'-extranucleotides from tRNA precursor.. In terms of biological role, part of ribonuclease P, a protein complex that generates mature tRNA molecules by cleaving their 5'-ends. Not absolutely essential for activity in vitro, however it strongly stimulates activity. Binds RNase P RNA. This is Ribonuclease P protein component 3 from Pyrococcus horikoshii (strain ATCC 700860 / DSM 12428 / JCM 9974 / NBRC 100139 / OT-3).